A 395-amino-acid chain; its full sequence is Xylose isomerase (395 aa).

Residues His-54 and Asp-57 contribute to the active site. Residues Glu-181, Glu-217, His-220, Asp-245, Asp-255, Asp-257, and Asp-293 each coordinate Mg(2+).

This sequence belongs to the xylose isomerase family. Homotetramer. The cofactor is Mg(2+).

It is found in the cytoplasm. It carries out the reaction alpha-D-xylose = alpha-D-xylulofuranose. The polypeptide is Xylose isomerase (Pseudarthrobacter chlorophenolicus (strain ATCC 700700 / DSM 12829 / CIP 107037 / JCM 12360 / KCTC 9906 / NCIMB 13794 / A6) (Arthrobacter chlorophenolicus)).